The primary structure comprises 322 residues: ATP-dependent 6-phosphofructokinase (322 aa).

Residues Gly-12, 73–74, and 103–106 contribute to the ATP site; these read RF and GDGT. Asp-104 is a binding site for Mg(2+). 126–128 contributes to the substrate binding site; that stretch reads TID. Residue Asp-128 is the Proton acceptor of the active site. Arg-155 contacts ADP. Substrate-binding positions include Arg-163 and 170–172; that span reads MGR. Residues 186–188, Lys-212, and 214–216 contribute to the ADP site; these read GSE and KPS. Substrate-binding positions include Glu-223, Arg-245, and 251–254; that span reads HTQR.

This sequence belongs to the phosphofructokinase type A (PFKA) family. ATP-dependent PFK group I subfamily. Prokaryotic clade 'B1' sub-subfamily. Homotetramer. It depends on Mg(2+) as a cofactor.

It localises to the cytoplasm. The enzyme catalyses beta-D-fructose 6-phosphate + ATP = beta-D-fructose 1,6-bisphosphate + ADP + H(+). It participates in carbohydrate degradation; glycolysis; D-glyceraldehyde 3-phosphate and glycerone phosphate from D-glucose: step 3/4. Allosterically activated by ADP and other diphosphonucleosides, and allosterically inhibited by phosphoenolpyruvate. In terms of biological role, catalyzes the phosphorylation of D-fructose 6-phosphate to fructose 1,6-bisphosphate by ATP, the first committing step of glycolysis. The protein is ATP-dependent 6-phosphofructokinase of Mesomycoplasma hyopneumoniae (strain 7448) (Mycoplasma hyopneumoniae).